The sequence spans 243 residues: Probable transcriptional regulatory protein BP2308 (243 aa).

A disordered region spans residues 1–21 (MAGHSKWANIQHRKGRQDAKR).

It belongs to the TACO1 family.

It localises to the cytoplasm. The sequence is that of Probable transcriptional regulatory protein BP2308 from Bordetella pertussis (strain Tohama I / ATCC BAA-589 / NCTC 13251).